Consider the following 224-residue polypeptide: Deoxyribose-phosphate aldolase (224 aa).

Residue D94 is the Proton donor/acceptor of the active site. Catalysis depends on K158, which acts as the Schiff-base intermediate with acetaldehyde. K187 acts as the Proton donor/acceptor in catalysis.

This sequence belongs to the DeoC/FbaB aldolase family. DeoC type 1 subfamily. Homodimer.

It localises to the cytoplasm. It carries out the reaction 2-deoxy-D-ribose 5-phosphate = D-glyceraldehyde 3-phosphate + acetaldehyde. Activated by citrate. Inhibited by NaBH(4). Activity is independent of divalent metal cations. Its function is as follows. Catalyzes a reversible aldol reaction between acetaldehyde and D-glyceraldehyde 3-phosphate to generate 2-deoxy-D-ribose 5-phosphate. Could be involved in pentose biosynthesis. The polypeptide is Deoxyribose-phosphate aldolase (Thermococcus kodakarensis (strain ATCC BAA-918 / JCM 12380 / KOD1) (Pyrococcus kodakaraensis (strain KOD1))).